The chain runs to 543 residues: Protein P78/83 (543 aa).

3 disordered regions span residues 147-222, 235-325, and 373-400; these read QALP…QPAA, RNEK…SLSN, and MAKSSSEATSNDEGWDDDDNRPNKANTP. A compositionally biased stretch (pro residues) spans 182-221; it reads AAPPPPPSPVPNIPAPPPPPPPSMSELPPAPPMPTEPQPA. The 21-residue stretch at 226–246 folds into the WH2 domain; it reads DRQQLLEAIRNEKNRTRLRPV. Positions 271–321 are enriched in pro residues; that stretch reads PKPPSASPPPPPPPPPPPAPPAPPPMVDLSSAPPPPPLVDLPSEMLPPPAP. Residues 375-384 are compositionally biased toward polar residues; it reads KSSSEATSND.

Forms a complex with proteins C42 and E27. Interacts with host actin-related protein 2/3 complex. Interacts with protein Ac102.

The protein localises to the host cytoplasm. It localises to the host nucleus. In terms of biological role, plays a role in the transport of the nucleocapsids from the cytoplasm toward the host nucleus together with the host actin-polymerizing Arp2/3 complex. The polypeptide is Protein P78/83 (P61) (Lepidoptera (butterflies and moths)).